A 188-amino-acid chain; its full sequence is Inosine triphosphate pyrophosphatase (188 aa).

ITP is bound at residue 12 to 17 (TGNKNK). E40 contacts Mg(2+). ITP-binding positions include K52, 68 to 69 (DT), K85, 144 to 147 (FGWD), K165, and 170 to 171 (HR).

The protein belongs to the HAM1 NTPase family. In terms of assembly, homodimer. It depends on Mg(2+) as a cofactor. Mn(2+) is required as a cofactor.

The protein localises to the cytoplasm. Its subcellular location is the nucleus. It catalyses the reaction ITP + H2O = IMP + diphosphate + H(+). It carries out the reaction dITP + H2O = dIMP + diphosphate + H(+). The catalysed reaction is XTP + H2O = XMP + diphosphate + H(+). Its function is as follows. Pyrophosphatase that hydrolyzes non-canonical purine nucleotides such as inosine triphosphate (ITP), deoxyinosine triphosphate (dITP) or xanthosine 5'-triphosphate (XTP) to their respective monophosphate derivatives. The enzyme does not distinguish between the deoxy- and ribose forms. Probably excludes non-canonical purines from RNA and DNA precursor pools, thus preventing their incorporation into RNA and DNA and avoiding chromosomal lesions. The chain is Inosine triphosphate pyrophosphatase from Phaeosphaeria nodorum (strain SN15 / ATCC MYA-4574 / FGSC 10173) (Glume blotch fungus).